Here is a 91-residue protein sequence, read N- to C-terminus: uncharacterized protein (91 aa).

It is found in the plastid. It localises to the cyanelle. This is an uncharacterized protein from Cyanophora paradoxa.